A 1202-amino-acid polypeptide reads, in one-letter code: Metabotropic glycine receptor (1202 aa).

Positions 1 to 24 are cleaved as a signal peptide; it reads MGAMAYSLLLCLLLAHLGLGEVGA. The interval 25–62 is disordered; the sequence is SLDPSERPDSSRERTSRGKQHGQQLPRASAPDPSIPWS. Topologically, residues 25–417 are extracellular; it reads SLDPSERPDS…CFVQEDKYLR (393 aa). Basic and acidic residues predominate over residues 28–40; it reads PSERPDSSRERTS. The tract at residues 85–281 is cache-like region; the sequence is YLYTGDFHQL…CENGSYKPGW (197 aa). Residues Asn98 and Asn143 are each glycosylated (N-linked (GlcNAc...) asparagine). An intrachain disulfide couples Cys99 to Cys272. 2 residues coordinate glycine: Ser172 and Arg173. The N-linked (GlcNAc...) asparagine glycan is linked to Asn215. The segment at 234–253 is disordered; sequence LHRRGSNQGPRGLGHSWRRR. Glu271 contributes to the glycine binding site. N-linked (GlcNAc...) asparagine glycosylation occurs at Asn274. Asp307 is a binding site for glycine. N-linked (GlcNAc...) asparagine glycosylation occurs at Asn333. A helical transmembrane segment spans residues 418 to 439; it reads LAIISFQALCMLLDFVSMLVVY. The Cytoplasmic segment spans residues 440–451; that stretch reads HFRKAKSIRASG. The helical transmembrane segment at 452–474 threads the bilayer; sequence LILLETILFGSLLLYFPVVILYF. Residues 475-478 lie on the Extracellular side of the membrane; the sequence is EPST. The chain crosses the membrane as a helical span at residues 479-501; the sequence is FRCILLRWVRLLGFATVYGTVTL. Residues Cys481 and Cys573 are joined by a disulfide bond. The Cytoplasmic segment spans residues 502 to 525; it reads KLHRVLKVFLSRTAQRIPYMTGGR. A helical transmembrane segment spans residues 526–547; it reads VMRMLAVIVLVVFWFLVGWTSS. Over 548–576 the chain is Extracellular; the sequence is MCQNLERDILLVGQGQTSDNLTFNMCLID. A helical membrane pass occupies residues 577–597; the sequence is RWDYMTAVAEFLFLLWGIYLC. The Cytoplasmic portion of the chain corresponds to 598–611; that stretch reads YAVRTVPSAFHEPR. Residues 612–633 form a helical membrane-spanning segment; sequence YMAVAVHNELIITAIFHTIRFV. Residues 634–642 are Extracellular-facing; the sequence is LASRLQPDW. A helical transmembrane segment spans residues 643-664; it reads MLMLYFAHTHLTVTVTIGLLLI. Residues 665–1202 lie on the Cytoplasmic side of the membrane; it reads PKFSHSSNNP…SASKIPGPRK (538 aa). Residues Ser694, Ser705, and Ser708 each carry the phosphoserine modification. Disordered regions lie at residues 757–899 and 914–995; these read RITE…TSML and LGLA…QIKD. 2 stretches are compositionally biased toward basic and acidic residues: residues 769-781 and 819-828; these read CSKEDKEGTDHSA and STYDHVRDQT. Lys774 participates in a covalent cross-link: Glycyl lysine isopeptide (Lys-Gly) (interchain with G-Cter in ubiquitin). Residues 845–856 are compositionally biased toward low complexity; the sequence is ENSTLESLSSKK. A Phosphoserine modification is found at Ser865. The span at 925–943 shows a compositional bias: basic and acidic residues; the sequence is MEDRAKSQKPQPKDRETNR. Polar residues-rich tracts occupy residues 944-958 and 975-994; these read KYSNSDNTETNPNSN and QRVNLPTANPDASSSTTQIK. Ser946 carries the phosphoserine modification. A VCPWE motif 1 motif is present at residues 1002-1006; sequence VCPWE. Position 1061 is a phosphoserine (Ser1061). A VCPWE motif 2 motif is present at residues 1067–1071; it reads VCPWE. Ser1076 carries the post-translational modification Phosphoserine. Composition is skewed to polar residues over residues 1132-1144 and 1151-1162; these read QMGDQEKQTSSSV and CISSNNSPQPLT. A disordered region spans residues 1132–1162; the sequence is QMGDQEKQTSSSVDIIPGSCISSNNSPQPLT. A VCPWE motif 3 motif is present at residues 1167–1171; the sequence is VCPWE.

The protein belongs to the G-protein coupled receptor 3 family. In terms of assembly, homodimer. Associates with the RGS7-GNB5 complex, promoting its localization to the cell membrane and regulating its GTPase activator activity. Interacts (via VCPWE motifs) with GNAO1. Interacts with GPC4. Interacts with EGFLAM.

The protein localises to the cell membrane. It localises to the postsynaptic cell membrane. The protein resides in the presynaptic cell membrane. Its subcellular location is the nucleus. Metabotropic receptor for glycine that controls synapse formation and function in the brain. Acts as an atypical G-protein coupled receptor that recruits and regulates the RGS7-GNB5 complex instead of activating G proteins. In absence of glycine ligand, promotes the GTPase activator activity of RGS7, increasing the GTPase activity of G protein alpha subunits, thereby driving them into their inactive GDP-bound form. Glycine-binding changes the conformation of the intracellular surface, inhibiting the GTPase activator activity of the RGS7-GNB5 complex, promoting G protein alpha subunits into their active GTP-bound form and regulating cAMP levels. Also able to bind taurine, a compound closely related to glycine, but with a two-fold lower affinity. Glycine receptor-dependent regulation of cAMP controls key ion channels, kinases and neurotrophic factors involved in neuronal excitability and synaptic transmission. Plays a pivotal role in regulating mood and cognition via its ability to regulate neuronal excitability in L2/L3 pyramidal neurons of the prefrontal cortex. Also involved in spatial learning by regulating hippocampal CA1 neuronal excitability. Acts as a synaptic organizer in the hippocampus, required for proper mossy fiber-CA3 neurocircuitry establishment, structure and function: induces presynaptic differentiation in contacting axons via its interaction with GPC4. In addition to glycine, may also act as a receptor for osteocalcin (BGLAP) hormone: osteocalcin-binding initiates a signaling response that prevents neuronal apoptosis in the hippocampus and regulates the synthesis of neurotransmitters. The sequence is that of Metabotropic glycine receptor from Rattus norvegicus (Rat).